A 983-amino-acid polypeptide reads, in one-letter code: Probable beta-galactosidase C (983 aa).

Residues 1-23 (MRIFSFLFLLLLGILTGQGLVSG) form the signal peptide. Substrate-binding residues include Y82, N127, A128, E129, and N187. E188 acts as the Proton donor in catalysis. N-linked (GlcNAc...) asparagine glycosylation occurs at N197. Y251 contributes to the substrate binding site. The cysteines at positions 257 and 304 are disulfide-linked. N-linked (GlcNAc...) asparagine glycosylation occurs at N276. E287 (nucleophile) is an active-site residue. Substrate is bound at residue Y353. 10 N-linked (GlcNAc...) asparagine glycosylation sites follow: N391, N434, N466, N516, N601, N676, N714, N719, N758, and N804.

Belongs to the glycosyl hydrolase 35 family.

The protein localises to the secreted. It catalyses the reaction Hydrolysis of terminal non-reducing beta-D-galactose residues in beta-D-galactosides.. In terms of biological role, cleaves beta-linked terminal galactosyl residues from gangliosides, glycoproteins, and glycosaminoglycans. The protein is Probable beta-galactosidase C (lacC) of Aspergillus fumigatus (strain CBS 144.89 / FGSC A1163 / CEA10) (Neosartorya fumigata).